The chain runs to 729 residues: Polyribonucleotide nucleotidyltransferase (729 aa).

Mg(2+) is bound by residues Asp516 and Asp522. In terms of domain architecture, KH spans 581-641 (PSTEHFSINP…EKVAAAKEHI (61 aa)). Residues 658–725 (GKTYVGKVKK…KGKKVELATP (68 aa)) form the S1 motif domain.

The protein belongs to the polyribonucleotide nucleotidyltransferase family. It depends on Mg(2+) as a cofactor.

It localises to the cytoplasm. It catalyses the reaction RNA(n+1) + phosphate = RNA(n) + a ribonucleoside 5'-diphosphate. In terms of biological role, involved in mRNA degradation. Catalyzes the phosphorolysis of single-stranded polyribonucleotides processively in the 3'- to 5'-direction. The protein is Polyribonucleotide nucleotidyltransferase of Sulfurovum sp. (strain NBC37-1).